Reading from the N-terminus, the 102-residue chain is MKFKYGATLFSGFLGLSAILAACGAKGKFDQVDDGKIVLASSLTSKNAANALQAVVEKYNQVKGGNDYPIEITQITGGYDGGRGNLQTKLSVKDKTTFYNLI.

The N-terminal stretch at 1-22 (MKFKYGATLFSGFLGLSAILAA) is a signal peptide. Cys-23 carries N-palmitoyl cysteine lipidation. Cys-23 carries S-diacylglycerol cysteine lipidation.

Belongs to the MG185/MG260 family.

Its subcellular location is the cell membrane. This is an uncharacterized protein from Mycoplasma pneumoniae (strain ATCC 29342 / M129 / Subtype 1) (Mycoplasmoides pneumoniae).